Here is a 521-residue protein sequence, read N- to C-terminus: Glucose-1-phosphate adenylyltransferase small subunit, chloroplastic (521 aa).

The tract at residues 1 to 24 (MAASIGALKSSPSSHNCINERRND) is disordered. Residues 1–72 (MAASIGALKS…RSPLIVSPKA (72 aa)) constitute a chloroplast transit peptide.

This sequence belongs to the bacterial/plant glucose-1-phosphate adenylyltransferase family. Heterotetramer.

Its subcellular location is the plastid. The protein localises to the chloroplast. It carries out the reaction alpha-D-glucose 1-phosphate + ATP + H(+) = ADP-alpha-D-glucose + diphosphate. It functions in the pathway glycan biosynthesis; starch biosynthesis. With respect to regulation, activated by 3'phosphoglycerate, inhibited by orthophosphate. Allosteric regulation. Its function is as follows. This protein plays a role in synthesis of starch. It catalyzes the synthesis of the activated glycosyl donor, ADP-glucose from Glc-1-P and ATP. The protein is Glucose-1-phosphate adenylyltransferase small subunit, chloroplastic of Solanum lycopersicum (Tomato).